A 69-amino-acid chain; its full sequence is Large ribosomal subunit protein uL29 (69 aa).

This sequence belongs to the universal ribosomal protein uL29 family.

The sequence is that of Large ribosomal subunit protein uL29 from Parasynechococcus marenigrum (strain WH8102).